Reading from the N-terminus, the 205-residue chain is Small heat shock protein hspG12 (205 aa).

A sHSP domain is found at 35-205 (KTIIDILPPM…YSNTIKININ (171 aa)). The interval 99–147 (PSLLDTKEDEASIEEFDEDDIKPKSTETTSTLSNSKENKKDENKSKSTE) is disordered. A compositionally biased stretch (acidic residues) spans 109 to 118 (ASIEEFDEDD). Basic and acidic residues predominate over residues 134 to 147 (KENKKDENKSKSTE).

It belongs to the small heat shock protein (HSP20) family.

In Dictyostelium discoideum (Social amoeba), this protein is Small heat shock protein hspG12 (hspG12).